Here is a 20-residue protein sequence, read N- to C-terminus: Sperm acrosome membrane-associated protein 3, processed form (20 aa).

The protein belongs to the glycosyl hydrolase 22 family.

Functionally, sperm surface membrane protein that may be involved in sperm-egg plasma membrane adhesion and fusion during fertilization. It could be a potential receptor for the egg oligosaccharide residue N-acetylglucosamine, which is present in the extracellular matrix over the egg plasma membrane. The polypeptide is Sperm acrosome membrane-associated protein 3, processed form (SPACA3) (Vulpes vulpes (Red fox)).